We begin with the raw amino-acid sequence, 193 residues long: Peptidyl-tRNA hydrolase (193 aa).

Y15 contributes to the tRNA binding site. Residue H20 is the Proton acceptor of the active site. TRNA-binding residues include F65, N67, and N113.

Belongs to the PTH family. In terms of assembly, monomer.

The protein resides in the cytoplasm. The catalysed reaction is an N-acyl-L-alpha-aminoacyl-tRNA + H2O = an N-acyl-L-amino acid + a tRNA + H(+). Its function is as follows. Hydrolyzes ribosome-free peptidyl-tRNAs (with 1 or more amino acids incorporated), which drop off the ribosome during protein synthesis, or as a result of ribosome stalling. In terms of biological role, catalyzes the release of premature peptidyl moieties from peptidyl-tRNA molecules trapped in stalled 50S ribosomal subunits, and thus maintains levels of free tRNAs and 50S ribosomes. This chain is Peptidyl-tRNA hydrolase, found in Ehrlichia ruminantium (strain Welgevonden).